A 436-amino-acid polypeptide reads, in one-letter code: Adenylosuccinate synthetase (436 aa).

Residues 12–18 (GDEGKGK) and 40–42 (GHT) contribute to the GTP site. Asp13 serves as the catalytic Proton acceptor. Positions 13 and 40 each coordinate Mg(2+). Residues 13–16 (DEGK), 38–41 (NAGH), Thr128, Arg142, Gln223, Thr238, and Arg302 contribute to the IMP site. His41 (proton donor) is an active-site residue. Residue 298-304 (TTTGRRR) coordinates substrate. Residues Arg304, 330-332 (KLD), and 412-414 (SLG) each bind GTP.

It belongs to the adenylosuccinate synthetase family. Homodimer. The cofactor is Mg(2+).

The protein localises to the cytoplasm. The enzyme catalyses IMP + L-aspartate + GTP = N(6)-(1,2-dicarboxyethyl)-AMP + GDP + phosphate + 2 H(+). The protein operates within purine metabolism; AMP biosynthesis via de novo pathway; AMP from IMP: step 1/2. Functionally, plays an important role in the de novo pathway of purine nucleotide biosynthesis. Catalyzes the first committed step in the biosynthesis of AMP from IMP. The protein is Adenylosuccinate synthetase of Prochlorococcus marinus subsp. pastoris (strain CCMP1986 / NIES-2087 / MED4).